A 361-amino-acid chain; its full sequence is Outer mitochondrial transmembrane helix translocase (361 aa).

Over 1 to 15 (MVHAEAFSRPLSRNE) the chain is Mitochondrial intermembrane. Residues 16–32 (VVGLIFRLTIFGAVTYF) form a helical membrane-spanning segment. The Cytoplasmic segment spans residues 33–361 (TIKWMVDAID…QSVLTHVCLD (329 aa)). 133–140 (GPPGCGKT) serves as a coordination point for ATP. The residue at position 322 (S322) is a Phosphoserine.

This sequence belongs to the AAA ATPase family. MSP1 subfamily. In terms of assembly, interacts with GRIA2 and GRIP1 in an ATP-dependent manner. ATAD1-catalyzed ATP hydrolysis disrupts not only its binding to GRIA2 and GRIP1, but also interaction between GRIP1 and GRIA2, leading to AMPAR complex disassembly.

The protein resides in the mitochondrion outer membrane. Its subcellular location is the peroxisome membrane. The protein localises to the postsynaptic cell membrane. It carries out the reaction [protein]-with a C-terminal TM segment(out) + ATP + H2O = [protein]-with a C-terminal TM segment(in) + ADP + phosphate + H(+). Outer mitochondrial translocase required to remove mislocalized tail-anchored transmembrane proteins on mitochondria. Specifically recognizes and binds tail-anchored transmembrane proteins: acts as a dislocase that mediates the ATP-dependent extraction of mistargeted tail-anchored transmembrane proteins from the mitochondrion outer membrane. Also plays a critical role in regulating the surface expression of AMPA receptors (AMPAR), thereby regulating synaptic plasticity and learning and memory. Required for NMDA-stimulated AMPAR internalization and inhibition of GRIA1 and GRIA2 recycling back to the plasma membrane; these activities are ATPase-dependent. In Rattus norvegicus (Rat), this protein is Outer mitochondrial transmembrane helix translocase.